We begin with the raw amino-acid sequence, 467 residues long: Probable circularly permuted 1,3-beta-glucanase TOS1 (467 aa).

An N-terminal signal peptide occupies residues Met1–Ala21. The segment covering Pro158–Gly172 has biased composition (low complexity). Disordered regions lie at residues Pro158–Ser187 and Ser200–Val223. Gly residues predominate over residues Ser173–Tyr185. Over residues Ser203–Ser222 the composition is skewed to low complexity. Residues Glu374 to Glu379 carry the ExDxxE motif motif. Residues His391–Phe413 are disordered.

The protein belongs to the PGA52 family. In terms of processing, cleaved by KEX2 in vitro.

Its subcellular location is the secreted. It carries out the reaction Hydrolysis of (1-&gt;3)-beta-D-glucosidic linkages in (1-&gt;3)-beta-D-glucans.. In terms of biological role, probable circularly permuted 1,3-beta-glucanase involved in cell wall modification through beta-1,3-glucan network alterations such as increased branching or remodeling. Plays a role in engulfment by host macrophages. The chain is Probable circularly permuted 1,3-beta-glucanase TOS1 from Candida albicans (strain SC5314 / ATCC MYA-2876) (Yeast).